The chain runs to 706 residues: Elongation factor G (706 aa).

Residues 8–297 (SYVRNIGIGA…AVVDYLPSPN (290 aa)) form the tr-type G domain. Residues 17-24 (AHIDAGKT), 95-99 (DTPGH), and 149-152 (NKMD) each bind GTP.

The protein belongs to the TRAFAC class translation factor GTPase superfamily. Classic translation factor GTPase family. EF-G/EF-2 subfamily.

The protein localises to the cytoplasm. In terms of biological role, catalyzes the GTP-dependent ribosomal translocation step during translation elongation. During this step, the ribosome changes from the pre-translocational (PRE) to the post-translocational (POST) state as the newly formed A-site-bound peptidyl-tRNA and P-site-bound deacylated tRNA move to the P and E sites, respectively. Catalyzes the coordinated movement of the two tRNA molecules, the mRNA and conformational changes in the ribosome. This chain is Elongation factor G, found in Orientia tsutsugamushi (strain Ikeda) (Rickettsia tsutsugamushi).